A 129-amino-acid chain; its full sequence is Probable cytochrome b5 2 (129 aa).

The 77-residue stretch at 3–79 folds into the Cytochrome b5 heme-binding domain; that stretch reads EKTITVEEVL…LEKFYIGNLL (77 aa). Heme is bound by residues histidine 38 and histidine 62. A helical membrane pass occupies residues 105–125; that stretch reads VKPAMWLFVLVMVVAYFAFRK.

The protein belongs to the cytochrome b5 family.

The protein resides in the endoplasmic reticulum membrane. It is found in the microsome membrane. The protein localises to the mitochondrion. Functionally, membrane bound hemoprotein which function as an electron carrier for several membrane bound oxygenases. The sequence is that of Probable cytochrome b5 2 (oca8) from Schizosaccharomyces pombe (strain 972 / ATCC 24843) (Fission yeast).